Here is a 308-residue protein sequence, read N- to C-terminus: Ribosomal RNA large subunit methyltransferase F (308 aa).

It belongs to the methyltransferase superfamily. METTL16/RlmF family.

The protein resides in the cytoplasm. It carries out the reaction adenosine(1618) in 23S rRNA + S-adenosyl-L-methionine = N(6)-methyladenosine(1618) in 23S rRNA + S-adenosyl-L-homocysteine + H(+). Functionally, specifically methylates the adenine in position 1618 of 23S rRNA. The polypeptide is Ribosomal RNA large subunit methyltransferase F (Escherichia coli O17:K52:H18 (strain UMN026 / ExPEC)).